Here is a 673-residue protein sequence, read N- to C-terminus: MNLLPKTREEFAQTDYWNEFFKKRGEKAFEWYGEYLELCDQIHKYIKPADRILMLGCGNSKLSMDMYDTGFRDITNIDISPIAVKKMLELNAKSRPEMKFLQMDATAMTFPDESFSVSLDKGTLDALFADDEPETRAVVENYFKEILRTMRNGGRYVGISLLQEHILNFLLDFLPKHNCMLRIVHCLGVEQANKEKNADDALTLPVFVVVATKFKSLPMPVLEFGFGNDKMQRFTTVSELNSAVSSVQKAALVCNGLARSNIAGHNEVIMDLHRPSEQTPRYTIHILDKPPARGLGKYAAFIVPQGREVEWIFSTPAGRKKLQDSANFQRLAVVTLHRDQVYSTLDEVKQELADSIKNLSPAGLTDQIPYLSLGSDVGKRETLICGFSKISGDFRIEEVEANGKTLRRLIFLSNQFVVQSEALVKTVKIKGKKDRKKIDFGYLACQHHLYMSVGVQLATTVQHPKRDVEKDVLVVGLGGGGLCSFLHAALPQARITAVEIDPIMLEVAEQYFELKQDKRFHVVIDDGLDFVERCRNEDIHFDAVLFDVDSKDLSLGMSCPPQSFLATKILQHIKEIIGPKGLFMLNLVCRDESLRTEALNNLHKVFPAVCSYKLEEDINEIIYCANDEKYKTVEQWKKNMGTAGRGLNSAVKETKLASEDALEVAEFLSELKI.

This sequence belongs to the methyltransferase superfamily.

The catalysed reaction is L-lysyl-[protein] + S-adenosyl-L-methionine = N(6)-methyl-L-lysyl-[protein] + S-adenosyl-L-homocysteine + H(+). It catalyses the reaction N(6)-methyl-L-lysyl-[protein] + S-adenosyl-L-methionine = N(6),N(6)-dimethyl-L-lysyl-[protein] + S-adenosyl-L-homocysteine + H(+). The enzyme catalyses N-terminal glycyl-L-lysyl-L-glutamyl-[protein] + 3 S-adenosyl-L-methionine = N-terminal N,N,N-trimethyl-glycyl-L-lysyl-L-glutamyl-[protein] + 3 S-adenosyl-L-homocysteine + 3 H(+). Functionally, dual methyltransferase. It catalyzes N-terminal methylation of target proteins via its C-terminus. It catalyzes dimethylation on lysine residues of target proteins via its N-terminus. In Drosophila melanogaster (Fruit fly), this protein is eEF1A lysine and N-terminal methyltransferase homolog.